The primary structure comprises 341 residues: Phenylalanine--tRNA ligase alpha subunit (341 aa).

Residue Glu254 coordinates Mg(2+).

Belongs to the class-II aminoacyl-tRNA synthetase family. Phe-tRNA synthetase alpha subunit type 1 subfamily. Tetramer of two alpha and two beta subunits. It depends on Mg(2+) as a cofactor.

It localises to the cytoplasm. The enzyme catalyses tRNA(Phe) + L-phenylalanine + ATP = L-phenylalanyl-tRNA(Phe) + AMP + diphosphate + H(+). This is Phenylalanine--tRNA ligase alpha subunit from Chlorobaculum tepidum (strain ATCC 49652 / DSM 12025 / NBRC 103806 / TLS) (Chlorobium tepidum).